The following is a 192-amino-acid chain: Probable cobalt-precorrin-6B C(15)-methyltransferase (decarboxylating) (192 aa).

Residues threonine 17, 41–45, aspartate 62, and alanine 91 each bind S-adenosyl-L-methionine; that span reads GCGTG.

Belongs to the methyltransferase superfamily. Archaeal-type CbiT family. In terms of assembly, homotetramer.

The enzyme catalyses Co-precorrin-6B + S-adenosyl-L-methionine = Co-precorrin-7 + S-adenosyl-L-homocysteine + CO2. It participates in cofactor biosynthesis; adenosylcobalamin biosynthesis; cob(II)yrinate a,c-diamide from sirohydrochlorin (anaerobic route): step 8/10. Catalyzes the methylation of C-15 in cobalt-precorrin-6B followed by the decarboxylation of C-12 to form cobalt-precorrin-7. The chain is Probable cobalt-precorrin-6B C(15)-methyltransferase (decarboxylating) from Methanothermobacter thermautotrophicus (strain ATCC 29096 / DSM 1053 / JCM 10044 / NBRC 100330 / Delta H) (Methanobacterium thermoautotrophicum).